We begin with the raw amino-acid sequence, 506 residues long: Zinc finger and SCAN domain containing protein 4F (506 aa).

The tract at residues 1 to 24 (MASQQAPAKDLQTNNLEFTPTDSS) is disordered. Residues 37 to 119 (SAQLNFSPSN…RFMESLTDEC (83 aa)) enclose the SCAN box domain. C2H2-type zinc fingers lie at residues 395-417 (YKCEECSRMFKHARSLSSHQRTH), 424-446 (LLCVTCQKMFKRVSDRRTHEIIH), 452-474 (FKCSTCEKSFSHKTNLKSHEMIH), and 480-503 (YVCSLCSRRFRQSSTYHRHLRNYH).

In terms of tissue distribution, up-regulated in blastocyst outgrowths and is detectable in a mosaic fashion in ES cultures.

It localises to the nucleus. The protein resides in the chromosome. The protein localises to the telomere. Functionally, transcription factor required to regulate early development. Binds telomeres and plays a key role in genomic stability by regulating telomere elongation. Acts as an activator of spontaneous telomere sister chromatid exchange (T-SCE) and telomere elongation. The sequence is that of Zinc finger and SCAN domain containing protein 4F (Zscan4f) from Mus musculus (Mouse).